The sequence spans 590 residues: Zinc finger protein 703 (590 aa).

The segment covering 1 to 14 has biased composition (polar residues); it reads MSDSPAGSNPRTPE. Disordered regions lie at residues 1 to 43, 96 to 293, and 341 to 366; these read MSDS…DPLR, CSQI…AGHV, and LVGG…LTGA. Ser-2 is subject to N-acetylserine. Low complexity-rich tracts occupy residues 27–37, 128–139, 171–189, and 207–219; these read PAVPAAVSLLP, RSAPGAASAAAA, GSSS…PGDK, and APVS…SSPG. Basic and acidic residues predominate over residues 241–251; sequence ELDKKDQEPKP. Ser-252 carries the post-translational modification Phosphoserine. 2 stretches are compositionally biased toward gly residues: residues 260 to 273 and 341 to 352; these read RGGG…GGAE and LVGGQLSGGLGL. Residues 456 to 484 form a C2H2-type zinc finger; it reads HSCNWVAASGPCDKRFATSEELLSHLRTH. Arg-580 bears the Omega-N-methylarginine mark.

The protein belongs to the Elbow/Noc family. As to quaternary structure, interacts with TLE4; increases transcriptional repression. Interacts with DCAF7 and PHB2. May interact with HSPD1. Expressed in mammary epithelium.

It localises to the nucleus. The protein localises to the cytoplasm. Transcriptional corepressor which does not bind directly to DNA and may regulate transcription through recruitment of histone deacetylases to gene promoters. Regulates cell adhesion, migration and proliferation. May be required for segmental gene expression during hindbrain development. This is Zinc finger protein 703 (ZNF703) from Homo sapiens (Human).